The sequence spans 87 residues: Acyl-CoA-binding protein (87 aa).

Ser2 carries the post-translational modification N-acetylserine. In terms of domain architecture, ACB spans 2–87; sequence SQAEFEKAAE…VEELKQKYGI (86 aa). Position 8 is an N6-acetyllysine; alternate (Lys8). The residue at position 8 (Lys8) is an N6-succinyllysine; alternate. Lys14 provides a ligand contact to an acyl-CoA. Lys17 is modified (N6-succinyllysine). The residue at position 19 (Lys19) is an N6-acetyllysine. The residue at position 29 (Tyr29) is a Phosphotyrosine. An acyl-CoA-binding positions include 29–33, Lys51, Lys55, and Tyr74; that span reads YSHYK. Residue Lys51 is modified to N6-acetyllysine. Lys55 carries the post-translational modification N6-acetyllysine; alternate. Position 55 is an N6-succinyllysine; alternate (Lys55). Position 55 is an N6-(2-hydroxyisobutyryl)lysine; alternate (Lys55). Lys55 bears the N6-malonyllysine; alternate mark. Residue Lys77 is modified to N6-acetyllysine; alternate. Position 77 is an N6-succinyllysine; alternate (Lys77).

The protein belongs to the ACBP family. In terms of assembly, monomer.

The protein localises to the endoplasmic reticulum. It is found in the golgi apparatus. Functionally, binds medium- and long-chain acyl-CoA esters with very high affinity and may function as an intracellular carrier of acyl-CoA esters. It is also able to displace diazepam from the benzodiazepine (BZD) recognition site located on the GABA type A receptor. It is therefore possible that this protein also acts as a neuropeptide to modulate the action of the GABA receptor. This Oryctolagus cuniculus (Rabbit) protein is Acyl-CoA-binding protein (DBI).